The chain runs to 304 residues: tRNA pseudouridine synthase B (304 aa).

The active-site Nucleophile is Asp48.

This sequence belongs to the pseudouridine synthase TruB family. Type 1 subfamily.

It carries out the reaction uridine(55) in tRNA = pseudouridine(55) in tRNA. Its function is as follows. Responsible for synthesis of pseudouridine from uracil-55 in the psi GC loop of transfer RNAs. The sequence is that of tRNA pseudouridine synthase B from Pseudomonas paraeruginosa (strain DSM 24068 / PA7) (Pseudomonas aeruginosa (strain PA7)).